We begin with the raw amino-acid sequence, 57 residues long: MKPRVFFLLFLLVAAMIETGESEENEEGSNESGKSTEAKNTDASVDNEDSDIDGDSD.

A signal peptide spans 1–22 (MKPRVFFLLFLLVAAMIETGES). Composition is skewed to acidic residues over residues 20 to 29 (GESEENEEGS) and 45 to 57 (VDNE…GDSD). The interval 20-57 (GESEENEEGSNESGKSTEAKNTDASVDNEDSDIDGDSD) is disordered.

It belongs to the non-disulfide-bridged peptide (NDBP) superfamily. In terms of tissue distribution, expressed by the venom gland.

It localises to the secreted. This is Peptide BmKa1 from Olivierus martensii (Manchurian scorpion).